The chain runs to 692 residues: Aspartate--tRNA ligase, mitochondrial (692 aa).

The transit peptide at 1-61 (MNRVILKDSK…RNFTNTINNN (61 aa)) directs the protein to the mitochondrion. Glutamate 264 lines the L-aspartate pocket. Residues 287 to 290 (QQYK) form an aspartate region. L-aspartate is bound at residue arginine 309. ATP is bound by residues 309–311 (RDE) and glutamate 590. Arginine 597 is an L-aspartate binding site. 642–645 (GFDR) is a binding site for ATP.

This sequence belongs to the class-II aminoacyl-tRNA synthetase family. Type 1 subfamily.

The protein resides in the mitochondrion matrix. The catalysed reaction is tRNA(Asp) + L-aspartate + ATP = L-aspartyl-tRNA(Asp) + AMP + diphosphate. The protein is Aspartate--tRNA ligase, mitochondrial (maspS) of Dictyostelium discoideum (Social amoeba).